The following is a 469-amino-acid chain: MAVPISTVAETKELRGLNLIAAHSHIRGLGVDADSLQPRTSSQGLVGQEKARKAAAVILQMVKEGKIAGRAVLIAGPPSTGKTAIAMGMAQSLGSDVPFTMLAASEIFSMEMSKTEALTQAFRKSIGVRIKEESEIIEGEVVEIQVDRSVTGGNKQGKLTIKTTDMETIYDMGTKMIDSMTKERVMAGDVISIDKSSGKITKLGRSYARSRDYDAMGADTKFVQCPEGELQVRKEIVHTVSLHEIDVINSRTQGFLALFSGDTGEIRSEVRDQINTKVAEWKEEGKAEIIPGVLFIDEVHMLDIECFSYINRALEAELAPIVIMASNRGQARIRGTTYTSPHGLPLDFLDRVVIVSTQPYSGDEIRQILAIRAQEEEIDLSPDALALLTKIGQESNLRYASNIITTSHLLSQKRKAKEVSIDDVQRSYRLFYDPARSVKFVNAYEQRFIGDQGAVNFSAPANGDAMEIS.

An ATP-binding site is contributed by Gly76–Thr83.

It belongs to the RuvB family. May form heterododecamers with RVB1. Component of the SWR1 chromatin remodeling complex, the INO80 chromatin remodeling complex, and of the R2TP complex.

Its subcellular location is the nucleus. It carries out the reaction ATP + H2O = ADP + phosphate + H(+). In terms of biological role, DNA helicase which participates in several chromatin remodeling complexes, including the SWR1 and the INO80 complexes. The SWR1 complex mediates the ATP-dependent exchange of histone H2A for the H2A variant HZT1 leading to transcriptional regulation of selected genes by chromatin remodeling. The INO80 complex remodels chromatin by shifting nucleosomes and is involved in DNA repair. Also involved in pre-rRNA processing. The polypeptide is RuvB-like helicase 2 (rvb2) (Aspergillus fumigatus (strain ATCC MYA-4609 / CBS 101355 / FGSC A1100 / Af293) (Neosartorya fumigata)).